We begin with the raw amino-acid sequence, 501 residues long: Large ribosomal subunit protein uL2m (501 aa).

Disordered stretches follow at residues 187 to 217 and 459 to 501; these read GRER…APRR and AMNP…KRRN. A compositionally biased stretch (polar residues) spans 198–213; that stretch reads NTFSQSEGQRWKTQSG. Over residues 464-474 the composition is skewed to basic and acidic residues; sequence DHPHGGGEGRT.

The protein belongs to the universal ribosomal protein uL2 family.

It is found in the mitochondrion. In Marchantia polymorpha (Common liverwort), this protein is Large ribosomal subunit protein uL2m (RPL2).